The chain runs to 340 residues: 4-hydroxy-3-methylbut-2-enyl diphosphate reductase (340 aa).

Residue Cys-13 participates in [4Fe-4S] cluster binding. Residues His-42 and His-75 each contribute to the (2E)-4-hydroxy-3-methylbut-2-enyl diphosphate site. The dimethylallyl diphosphate site is built by His-42 and His-75. Residues His-42 and His-75 each coordinate isopentenyl diphosphate. Cys-97 is a binding site for [4Fe-4S] cluster. His-125 serves as a coordination point for (2E)-4-hydroxy-3-methylbut-2-enyl diphosphate. His-125 lines the dimethylallyl diphosphate pocket. His-125 is an isopentenyl diphosphate binding site. Residue Glu-127 is the Proton donor of the active site. Residue Thr-165 participates in (2E)-4-hydroxy-3-methylbut-2-enyl diphosphate binding. A [4Fe-4S] cluster-binding site is contributed by Cys-195. (2E)-4-hydroxy-3-methylbut-2-enyl diphosphate-binding residues include Ser-223, Ser-224, Asn-225, and Ser-267. Dimethylallyl diphosphate contacts are provided by Ser-223, Ser-224, Asn-225, and Ser-267. Isopentenyl diphosphate contacts are provided by Ser-223, Ser-224, Asn-225, and Ser-267. The tract at residues 317–340 is disordered; it reads NNLDNKTAASEEADSLSNDTEQEA. A compositionally biased stretch (polar residues) spans 331–340; that stretch reads SLSNDTEQEA.

Belongs to the IspH family. The cofactor is [4Fe-4S] cluster.

It catalyses the reaction isopentenyl diphosphate + 2 oxidized [2Fe-2S]-[ferredoxin] + H2O = (2E)-4-hydroxy-3-methylbut-2-enyl diphosphate + 2 reduced [2Fe-2S]-[ferredoxin] + 2 H(+). It carries out the reaction dimethylallyl diphosphate + 2 oxidized [2Fe-2S]-[ferredoxin] + H2O = (2E)-4-hydroxy-3-methylbut-2-enyl diphosphate + 2 reduced [2Fe-2S]-[ferredoxin] + 2 H(+). It functions in the pathway isoprenoid biosynthesis; dimethylallyl diphosphate biosynthesis; dimethylallyl diphosphate from (2E)-4-hydroxy-3-methylbutenyl diphosphate: step 1/1. The protein operates within isoprenoid biosynthesis; isopentenyl diphosphate biosynthesis via DXP pathway; isopentenyl diphosphate from 1-deoxy-D-xylulose 5-phosphate: step 6/6. Its function is as follows. Catalyzes the conversion of 1-hydroxy-2-methyl-2-(E)-butenyl 4-diphosphate (HMBPP) into a mixture of isopentenyl diphosphate (IPP) and dimethylallyl diphosphate (DMAPP). Acts in the terminal step of the DOXP/MEP pathway for isoprenoid precursor biosynthesis. This is 4-hydroxy-3-methylbut-2-enyl diphosphate reductase from Zymomonas mobilis subsp. mobilis (strain ATCC 31821 / ZM4 / CP4).